The chain runs to 299 residues: Glycine--tRNA ligase alpha subunit (299 aa).

The protein belongs to the class-II aminoacyl-tRNA synthetase family. Tetramer of two alpha and two beta subunits.

Its subcellular location is the cytoplasm. The enzyme catalyses tRNA(Gly) + glycine + ATP = glycyl-tRNA(Gly) + AMP + diphosphate. This is Glycine--tRNA ligase alpha subunit from Pediococcus pentosaceus (strain ATCC 25745 / CCUG 21536 / LMG 10740 / 183-1w).